A 109-amino-acid polypeptide reads, in one-letter code: Putative pterin-4-alpha-carbinolamine dehydratase (109 aa).

Belongs to the pterin-4-alpha-carbinolamine dehydratase family.

It carries out the reaction (4aS,6R)-4a-hydroxy-L-erythro-5,6,7,8-tetrahydrobiopterin = (6R)-L-erythro-6,7-dihydrobiopterin + H2O. This is Putative pterin-4-alpha-carbinolamine dehydratase from Rickettsia canadensis (strain McKiel).